The primary structure comprises 424 residues: Serine--tRNA ligase (424 aa).

230 to 232 is a binding site for L-serine; sequence TAE. 261–263 provides a ligand contact to ATP; the sequence is RAE. Glutamate 284 contacts L-serine. 348 to 351 lines the ATP pocket; that stretch reads EISS. Serine 384 provides a ligand contact to L-serine.

Belongs to the class-II aminoacyl-tRNA synthetase family. Type-1 seryl-tRNA synthetase subfamily. As to quaternary structure, homodimer. The tRNA molecule binds across the dimer.

It localises to the cytoplasm. The enzyme catalyses tRNA(Ser) + L-serine + ATP = L-seryl-tRNA(Ser) + AMP + diphosphate + H(+). It catalyses the reaction tRNA(Sec) + L-serine + ATP = L-seryl-tRNA(Sec) + AMP + diphosphate + H(+). The protein operates within aminoacyl-tRNA biosynthesis; selenocysteinyl-tRNA(Sec) biosynthesis; L-seryl-tRNA(Sec) from L-serine and tRNA(Sec): step 1/1. Its function is as follows. Catalyzes the attachment of serine to tRNA(Ser). Is also able to aminoacylate tRNA(Sec) with serine, to form the misacylated tRNA L-seryl-tRNA(Sec), which will be further converted into selenocysteinyl-tRNA(Sec). The chain is Serine--tRNA ligase from Carboxydothermus hydrogenoformans (strain ATCC BAA-161 / DSM 6008 / Z-2901).